The chain runs to 344 residues: Protein pelota homolog (344 aa).

It belongs to the eukaryotic release factor 1 family. Pelota subfamily. Monomer. It depends on a divalent metal cation as a cofactor.

It localises to the cytoplasm. May function in recognizing stalled ribosomes, interact with stem-loop structures in stalled mRNA molecules, and effect endonucleolytic cleavage of the mRNA. May play a role in the release non-functional ribosomes and degradation of damaged mRNAs. Has endoribonuclease activity. This is Protein pelota homolog from Saccharolobus islandicus (strain Y.N.15.51 / Yellowstone #2) (Sulfolobus islandicus).